Reading from the N-terminus, the 354-residue chain is Probable L-ascorbate-6-phosphate lactonase UlaG (354 aa).

It belongs to the UlaG family. Requires a divalent metal cation as cofactor.

The protein resides in the cytoplasm. It catalyses the reaction L-ascorbate 6-phosphate + H2O = 3-dehydro-L-gulonate 6-phosphate. It functions in the pathway cofactor degradation; L-ascorbate degradation; D-xylulose 5-phosphate from L-ascorbate: step 1/4. Functionally, probably catalyzes the hydrolysis of L-ascorbate-6-P into 3-keto-L-gulonate-6-P. Is essential for L-ascorbate utilization under anaerobic conditions. This is Probable L-ascorbate-6-phosphate lactonase UlaG from Shigella boydii serotype 4 (strain Sb227).